Here is a 23-residue protein sequence, read N- to C-terminus: Alyteserin-1b (23 aa).

Asn23 bears the Asparagine amide mark.

As to expression, expressed by the skin glands.

It is found in the secreted. The protein localises to the target cell membrane. Functionally, antibacterial peptide with amphipathic alpha-helical structure. Shows selective growth inhibitory activity against the Gram-negative bacteria E.coli (MIC=25 uM). Has a weak hemolytic activity against human erythrocytes (LC(50)=200 uM). Is not active against S.aureus (MIC=200 uM). The chain is Alyteserin-1b from Alytes obstetricans (Common midwife toad).